Here is an 813-residue protein sequence, read N- to C-terminus: Leucine--tRNA ligase (813 aa).

The 'HIGH' region motif lies at 42–52; the sequence is PYTSGNLHIGH. Residues 580–584 carry the 'KMSKS' region motif; the sequence is KMSKS. Lys-583 contributes to the ATP binding site.

It belongs to the class-I aminoacyl-tRNA synthetase family.

It localises to the cytoplasm. The catalysed reaction is tRNA(Leu) + L-leucine + ATP = L-leucyl-tRNA(Leu) + AMP + diphosphate. This Dehalococcoides mccartyi (strain ATCC BAA-2100 / JCM 16839 / KCTC 5957 / BAV1) protein is Leucine--tRNA ligase.